Reading from the N-terminus, the 422-residue chain is Gamma-glutamyl phosphate reductase (422 aa).

This sequence belongs to the gamma-glutamyl phosphate reductase family.

It is found in the cytoplasm. The enzyme catalyses L-glutamate 5-semialdehyde + phosphate + NADP(+) = L-glutamyl 5-phosphate + NADPH + H(+). Its pathway is amino-acid biosynthesis; L-proline biosynthesis; L-glutamate 5-semialdehyde from L-glutamate: step 2/2. In terms of biological role, catalyzes the NADPH-dependent reduction of L-glutamate 5-phosphate into L-glutamate 5-semialdehyde and phosphate. The product spontaneously undergoes cyclization to form 1-pyrroline-5-carboxylate. In Saccharophagus degradans (strain 2-40 / ATCC 43961 / DSM 17024), this protein is Gamma-glutamyl phosphate reductase.